A 463-amino-acid polypeptide reads, in one-letter code: Ribosomal protein uS12 methylthiotransferase RimO (463 aa).

The region spanning 15–130 (PKVGMVSLGC…VMQAVHSHLP (116 aa)) is the MTTase N-terminal domain. [4Fe-4S] cluster is bound by residues C24, C60, C89, C161, C165, and C168. One can recognise a Radical SAM core domain in the interval 147 to 392 (LTPRHYAYLK…MEVAEEVSAA (246 aa)). The TRAM domain maps to 395-463 (ARKIGKTLKV…ADGHDLWGEV (69 aa)).

Belongs to the methylthiotransferase family. RimO subfamily. It depends on [4Fe-4S] cluster as a cofactor.

It localises to the cytoplasm. It carries out the reaction L-aspartate(89)-[ribosomal protein uS12]-hydrogen + (sulfur carrier)-SH + AH2 + 2 S-adenosyl-L-methionine = 3-methylsulfanyl-L-aspartate(89)-[ribosomal protein uS12]-hydrogen + (sulfur carrier)-H + 5'-deoxyadenosine + L-methionine + A + S-adenosyl-L-homocysteine + 2 H(+). In terms of biological role, catalyzes the methylthiolation of an aspartic acid residue of ribosomal protein uS12. This Burkholderia mallei (strain NCTC 10229) protein is Ribosomal protein uS12 methylthiotransferase RimO.